Consider the following 393-residue polypeptide: Putative odorant receptor 69a, isoform B (393 aa).

At 1 to 39 (MQLEDFMRYPDLVCQAAQLPRYTWNGRRSLEVKRNLAKR) the chain is on the cytoplasmic side. A helical membrane pass occupies residues 40–60 (IIFWLGAVNLVYHNIGCVMYG). Residues 61-69 (YFGDGRTKD) lie on the Extracellular side of the membrane. The helical transmembrane segment at 70–90 (PIAYLAELASVASMLGFTIVG) threads the bilayer. The Cytoplasmic portion of the chain corresponds to 91–138 (TLNLWKMLSLKTHFENLLNEFEELFQLIKHRAYRIHHYQEKYTRHIRN). Residues 139–159 (TFIFHTSAVVYYNSLPILLMI) form a helical membrane-spanning segment. The Extracellular portion of the chain corresponds to 160–208 (REHFSNSQQLGYRIQSNTWYPWQVQGSIPGFFAAVACQIFSCQTNMCVN). Residues 209-229 (MFIQFLINFFGIQLEIHFDGL) form a helical membrane-spanning segment. The Cytoplasmic portion of the chain corresponds to 230–269 (ARQLETIDARNPHAKDQLKYLIVYHTKLLNLADRVNRSFN). A helical transmembrane segment spans residues 270-290 (FTFLISLSVSMISNCFLAFSM). The Extracellular portion of the chain corresponds to 291-305 (TMFDFGTSLKHLLGL). The chain crosses the membrane as a helical span at residues 306–326 (LLFITYNFSMCRSGTHLILTS). The Cytoplasmic portion of the chain corresponds to 327–365 (GKVLPAAFYNNWYEGDLVYRRMLLILMMRATKPYMWKTY). A helical transmembrane segment spans residues 366–386 (KLAPVSITTYMATLKFSYQMF). Residues 387–393 (TCVRSLK) lie on the Extracellular side of the membrane.

Belongs to the insect chemoreceptor superfamily. Heteromeric odorant receptor channel (TC 1.A.69) family. Or49a subfamily. As to quaternary structure, interacts with Orco. Complexes exist early in the endomembrane system in olfactory sensory neurons (OSNs), coupling these complexes to the conserved ciliary trafficking pathway. In terms of tissue distribution, expressed in olfactory sensory neurons in the antenna.

It localises to the cell membrane. Odorant receptor which mediates acceptance or avoidance behavior, depending on its substrates. The odorant receptor repertoire encodes a large collection of odor stimuli that vary widely in identity, intensity, and duration. May form a complex with Orco to form odorant-sensing units, providing sensitive and prolonged odorant signaling and calcium permeability. The polypeptide is Putative odorant receptor 69a, isoform B (Or69a) (Drosophila melanogaster (Fruit fly)).